Consider the following 513-residue polypeptide: ATP synthase subunit alpha (513 aa).

169-176 (GDRQTGKT) provides a ligand contact to ATP.

The protein belongs to the ATPase alpha/beta chains family. In terms of assembly, F-type ATPases have 2 components, CF(1) - the catalytic core - and CF(0) - the membrane proton channel. CF(1) has five subunits: alpha(3), beta(3), gamma(1), delta(1), epsilon(1). CF(0) has three main subunits: a(1), b(2) and c(9-12). The alpha and beta chains form an alternating ring which encloses part of the gamma chain. CF(1) is attached to CF(0) by a central stalk formed by the gamma and epsilon chains, while a peripheral stalk is formed by the delta and b chains.

It localises to the cell inner membrane. It catalyses the reaction ATP + H2O + 4 H(+)(in) = ADP + phosphate + 5 H(+)(out). Functionally, produces ATP from ADP in the presence of a proton gradient across the membrane. The alpha chain is a regulatory subunit. This chain is ATP synthase subunit alpha, found in Yersinia enterocolitica serotype O:8 / biotype 1B (strain NCTC 13174 / 8081).